An 89-amino-acid polypeptide reads, in one-letter code: Small ribosomal subunit protein uS15 (89 aa).

This sequence belongs to the universal ribosomal protein uS15 family. Part of the 30S ribosomal subunit. Forms a bridge to the 50S subunit in the 70S ribosome, contacting the 23S rRNA.

Functionally, one of the primary rRNA binding proteins, it binds directly to 16S rRNA where it helps nucleate assembly of the platform of the 30S subunit by binding and bridging several RNA helices of the 16S rRNA. Its function is as follows. Forms an intersubunit bridge (bridge B4) with the 23S rRNA of the 50S subunit in the ribosome. The protein is Small ribosomal subunit protein uS15 of Prosthecochloris aestuarii (strain DSM 271 / SK 413).